The following is a 158-amino-acid chain: Small ribosomal subunit protein uS19 (158 aa).

This sequence belongs to the universal ribosomal protein uS19 family.

In terms of biological role, protein S19 forms a complex with S13 that binds strongly to the 16S ribosomal RNA. In Pyrobaculum aerophilum (strain ATCC 51768 / DSM 7523 / JCM 9630 / CIP 104966 / NBRC 100827 / IM2), this protein is Small ribosomal subunit protein uS19.